Here is a 345-residue protein sequence, read N- to C-terminus: MSENLSEKKKALEVALSNIEKRFGKGAVMPLKSVEKVQVETIPTGSLALDIATGVGGIPKGRITEIFGVESSGKTTLALHVIAEAQKRGGVAVFIDAEHALDPKYAKKLGVDVENLYISQPDYGEQALEIAESLINSGAVDVIVVDSVAALVPKDELEGEMGEAQVGKQARLMSQALRKLKGAVHKSNTALIFINQIREKIGVMFGNPETTPGGRALKFFSDMRLEVRRLGDVKEGGEKKGYRVKVRVVKNKLAPPFQEAEFDIIYGEGICKLCDLIEVATNLGIFTKSGSWYSYGDKRLGQGKEQVKKYLQEHPELIDEIDQKVREAAGLAGSNIEESTGEEGK.

68–75 serves as a coordination point for ATP; the sequence is GVESSGKT.

The protein belongs to the RecA family.

It is found in the cytoplasm. Functionally, can catalyze the hydrolysis of ATP in the presence of single-stranded DNA, the ATP-dependent uptake of single-stranded DNA by duplex DNA, and the ATP-dependent hybridization of homologous single-stranded DNAs. It interacts with LexA causing its activation and leading to its autocatalytic cleavage. In Aquifex aeolicus (strain VF5), this protein is Protein RecA.